Here is a 543-residue protein sequence, read N- to C-terminus: CTP synthase (543 aa).

An amidoligase domain region spans residues 1 to 265; sequence MTRFVFITGG…DTEVLRHFGL (265 aa). Ser-13 is a CTP binding site. Ser-13 serves as a coordination point for UTP. Residue 14 to 19 participates in ATP binding; that stretch reads SLGKGI. Tyr-54 serves as a coordination point for L-glutamine. Asp-71 serves as a coordination point for ATP. Mg(2+) is bound by residues Asp-71 and Glu-139. CTP-binding positions include 146–148, 186–191, and Lys-222; these read DIE and KTKPTQ. UTP contacts are provided by residues 186 to 191 and Lys-222; that span reads KTKPTQ. The Glutamine amidotransferase type-1 domain maps to 291–542; that stretch reads RIAVVGKYTA…VGAAVKKMRL (252 aa). Gly-354 provides a ligand contact to L-glutamine. The Nucleophile; for glutamine hydrolysis role is filled by Cys-381. Residues 382 to 385, Glu-405, and Arg-470 each bind L-glutamine; that span reads FGMQ. Residues His-515 and Glu-517 contribute to the active site.

It belongs to the CTP synthase family. As to quaternary structure, homotetramer.

It catalyses the reaction UTP + L-glutamine + ATP + H2O = CTP + L-glutamate + ADP + phosphate + 2 H(+). It carries out the reaction L-glutamine + H2O = L-glutamate + NH4(+). The catalysed reaction is UTP + NH4(+) + ATP = CTP + ADP + phosphate + 2 H(+). Its pathway is pyrimidine metabolism; CTP biosynthesis via de novo pathway; CTP from UDP: step 2/2. Its activity is regulated as follows. Allosterically activated by GTP, when glutamine is the substrate; GTP has no effect on the reaction when ammonia is the substrate. The allosteric effector GTP functions by stabilizing the protein conformation that binds the tetrahedral intermediate(s) formed during glutamine hydrolysis. Inhibited by the product CTP, via allosteric rather than competitive inhibition. Functionally, catalyzes the ATP-dependent amination of UTP to CTP with either L-glutamine or ammonia as the source of nitrogen. Regulates intracellular CTP levels through interactions with the four ribonucleotide triphosphates. The protein is CTP synthase of Gluconacetobacter diazotrophicus (strain ATCC 49037 / DSM 5601 / CCUG 37298 / CIP 103539 / LMG 7603 / PAl5).